Consider the following 246-residue polypeptide: 4-hydroxy-tetrahydrodipicolinate reductase (246 aa).

NAD(+) contacts are provided by residues 8–13, 75–77, and 99–102; these read GISGRM, GTT, and ASNY. Catalysis depends on His-132, which acts as the Proton donor/acceptor. (S)-2,3,4,5-tetrahydrodipicolinate is bound at residue His-133. The active-site Proton donor is Lys-136. 142–143 contacts (S)-2,3,4,5-tetrahydrodipicolinate; it reads GT.

It belongs to the DapB family.

The protein localises to the cytoplasm. The enzyme catalyses (S)-2,3,4,5-tetrahydrodipicolinate + NAD(+) + H2O = (2S,4S)-4-hydroxy-2,3,4,5-tetrahydrodipicolinate + NADH + H(+). The catalysed reaction is (S)-2,3,4,5-tetrahydrodipicolinate + NADP(+) + H2O = (2S,4S)-4-hydroxy-2,3,4,5-tetrahydrodipicolinate + NADPH + H(+). The protein operates within amino-acid biosynthesis; L-lysine biosynthesis via DAP pathway; (S)-tetrahydrodipicolinate from L-aspartate: step 4/4. In terms of biological role, catalyzes the conversion of 4-hydroxy-tetrahydrodipicolinate (HTPA) to tetrahydrodipicolinate. This Akkermansia muciniphila (strain ATCC BAA-835 / DSM 22959 / JCM 33894 / BCRC 81048 / CCUG 64013 / CIP 107961 / Muc) protein is 4-hydroxy-tetrahydrodipicolinate reductase.